The following is a 319-amino-acid chain: GPI-specific phospholipase A2-like PGAP3 (319 aa).

The signal sequence occupies residues 1–23; the sequence is MAGRTARLVLLAGAAALASGSQG. Over 24-101 the chain is Lumenal; that stretch reads DREPVYRDCV…GKWPFSRFLC (78 aa). The N-linked (GlcNAc...) asparagine glycan is linked to N40. A helical membrane pass occupies residues 102-122; sequence FQEPASAVASFLNGLASLVML. Topologically, residues 123–135 are cytoplasmic; sequence CRYRTSVPASSPM. A helical membrane pass occupies residues 136–156; sequence YPTCVAFAWVSLNAWFWSTVF. At 157-169 the chain is on the lumenal side; it reads HTRDTDLTEKMDY. Residues 170–190 traverse the membrane as a helical segment; it reads FCASTVILHSIYLCCVRTVGL. Residues 191 to 200 are Cytoplasmic-facing; it reads QHPAMASAFR. Residues 201–221 form a helical membrane-spanning segment; it reads ALLLLLLTAHVSYLSLIHFDY. Topologically, residues 222-224 are lumenal; the sequence is GYN. A helical transmembrane segment spans residues 225-245; sequence MAANVAIGLLNAAWWLAWCLW. Over 246 to 257 the chain is Cytoplasmic; the sequence is NQRLPHVHKCVA. The chain crosses the membrane as a helical span at residues 258 to 278; that stretch reads VVLLLQGLSLLELLDFPPLFW. Topologically, residues 279-281 are lumenal; that stretch reads VLD. Residues 282–302 form a helical membrane-spanning segment; that stretch reads AHAIWHISTIPVHVLFFSFLE. Residues 303–319 are Cytoplasmic-facing; sequence DDSLYLLKESEAKVKLD.

It belongs to the PGAP3 family.

The protein localises to the golgi apparatus membrane. In terms of biological role, involved in the fatty acid remodeling steps of GPI-anchor maturation where the unsaturated acyl chain at sn-2 of inositol phosphate is replaced by a saturated stearoyl chain. May catalyze the first step of the fatty acid remodeling, by removing the unsaturated acyl chain at sn-2 of inositol phosphate, generating a lyso-GPI intermediate. The fatty acid remodeling steps is critical for the integration of GPI-APs into lipid rafts. In Bos taurus (Bovine), this protein is GPI-specific phospholipase A2-like PGAP3.